The chain runs to 314 residues: 2,3-dihydroxyphenylpropionate/2,3-dihydroxicinnamic acid 1,2-dioxygenase (314 aa).

The Proton donor role is filled by H115. The Proton acceptor role is filled by H179.

Belongs to the LigB/MhpB extradiol dioxygenase family. As to quaternary structure, homotetramer. Fe(2+) serves as cofactor.

The enzyme catalyses 3-(2,3-dihydroxyphenyl)propanoate + O2 = (2Z,4E)-2-hydroxy-6-oxonona-2,4-dienedioate + H(+). The catalysed reaction is (2E)-3-(2,3-dihydroxyphenyl)prop-2-enoate + O2 = (2Z,4E,7E)-2-hydroxy-6-oxonona-2,4,7-trienedioate + H(+). Its pathway is aromatic compound metabolism; 3-phenylpropanoate degradation. In terms of biological role, catalyzes the non-heme iron(II)-dependent oxidative cleavage of 2,3-dihydroxyphenylpropionic acid and 2,3-dihydroxicinnamic acid into 2-hydroxy-6-ketononadienedioate and 2-hydroxy-6-ketononatrienedioate, respectively. This chain is 2,3-dihydroxyphenylpropionate/2,3-dihydroxicinnamic acid 1,2-dioxygenase, found in Klebsiella pneumoniae subsp. pneumoniae (strain ATCC 700721 / MGH 78578).